Consider the following 143-residue polypeptide: 3-hydroxyacyl-[acyl-carrier-protein] dehydratase FabZ (143 aa).

Residue His47 is part of the active site.

The protein belongs to the thioester dehydratase family. FabZ subfamily.

It localises to the cytoplasm. The catalysed reaction is a (3R)-hydroxyacyl-[ACP] = a (2E)-enoyl-[ACP] + H2O. Its function is as follows. Involved in unsaturated fatty acids biosynthesis. Catalyzes the dehydration of short chain beta-hydroxyacyl-ACPs and long chain saturated and unsaturated beta-hydroxyacyl-ACPs. This Moorella thermoacetica (strain ATCC 39073 / JCM 9320) protein is 3-hydroxyacyl-[acyl-carrier-protein] dehydratase FabZ.